The sequence spans 246 residues: uncharacterized protein (246 aa).

A helical membrane pass occupies residues 7–29 (GRGALASTGGCVVLAVAALMFVF).

It localises to the membrane. This is an uncharacterized protein from Treponema pallidum (strain Nichols).